The following is a 375-amino-acid chain: Trichodiene synthase (375 aa).

The protein belongs to the trichodiene synthase family.

It catalyses the reaction (2E,6E)-farnesyl diphosphate = trichodiene + diphosphate. It functions in the pathway sesquiterpene biosynthesis; trichothecene biosynthesis. In terms of biological role, TS is a member of the terpene cyclase group of enzymes. It catalyzes the isomerization and cyclization of farnesyl pyro-phosphate to form trichodiene, the first cyclic intermediate in the biosynthetic pathway for trichothecenes. It serves to branch trichothecene biosynthesis from the isoprenoid pathway. The sequence is that of Trichodiene synthase (TRI5) from Fusarium acaciae-mearnsii.